Consider the following 275-residue polypeptide: uncharacterized protein (275 aa).

The next 3 helical transmembrane spans lie at 15–35 (LFLPLLGGSVSGSLFGRFLGS), 39–59 (AIMITTCVSFCALVVFIFGLF), and 70–90 (ILYLFLVGFVLSLIRIKVVYL). A disordered region spans residues 140-191 (SSKTDMDSQVAEAPQTEEGEPSVNQVPQEAGASHRVGPYQDQGLATDRNGNP).

The protein resides in the mitochondrion membrane. This is an uncharacterized protein from Arabidopsis thaliana (Mouse-ear cress).